Consider the following 211-residue polypeptide: Flagellar calcium-binding protein (211 aa).

The disordered stretch occupies residues 1-29 (MGACGSKGSTSDKGLASDKDGKKAKDRKE). The segment covering 15-29 (LASDKDGKKAKDRKE) has biased composition (basic and acidic residues). 4 consecutive EF-hand domains span residues 45–80 (EAKQ…VLKL), 81–116 (DEFT…FVEF), 127–162 (YDFF…LEAW), and 164–199 (AKVE…VKLD). Ca(2+) is bound by residues Asp-58, Asn-60, Thr-62, Lys-64, and Glu-69. Ca(2+) is bound by residues Asp-140, Ser-142, Asn-144, Glu-151, Asp-177, Asn-179, Thr-181, Ser-183, and Glu-188.

Belongs to the calflagin family.

The protein localises to the cell projection. It localises to the cilium. The protein resides in the flagellum. Functionally, may contribute to the rapid motility of the trypanosomes, playing a role either in flagellar structure or in calcium metabolism. Could alternate between a GDP-bound inactive form to a calcium/GTP-bound active form. The chain is Flagellar calcium-binding protein (FCABP) from Trypanosoma cruzi.